A 156-amino-acid chain; its full sequence is 6,7-dimethyl-8-ribityllumazine synthase (156 aa).

5-amino-6-(D-ribitylamino)uracil contacts are provided by residues F22, 57–59 (AYE), and 81–83 (TVI). 86–87 (GT) lines the (2S)-2-hydroxy-3-oxobutyl phosphate pocket. H89 functions as the Proton donor in the catalytic mechanism. F114 is a 5-amino-6-(D-ribitylamino)uracil binding site. R128 contacts (2S)-2-hydroxy-3-oxobutyl phosphate.

The protein belongs to the DMRL synthase family. In terms of assembly, forms an icosahedral capsid composed of 60 subunits, arranged as a dodecamer of pentamers.

The enzyme catalyses (2S)-2-hydroxy-3-oxobutyl phosphate + 5-amino-6-(D-ribitylamino)uracil = 6,7-dimethyl-8-(1-D-ribityl)lumazine + phosphate + 2 H2O + H(+). The protein operates within cofactor biosynthesis; riboflavin biosynthesis; riboflavin from 2-hydroxy-3-oxobutyl phosphate and 5-amino-6-(D-ribitylamino)uracil: step 1/2. Catalyzes the formation of 6,7-dimethyl-8-ribityllumazine by condensation of 5-amino-6-(D-ribitylamino)uracil with 3,4-dihydroxy-2-butanone 4-phosphate. This is the penultimate step in the biosynthesis of riboflavin. This Salmonella heidelberg (strain SL476) protein is 6,7-dimethyl-8-ribityllumazine synthase.